We begin with the raw amino-acid sequence, 89 residues long: Small ribosomal subunit protein uS15 (89 aa).

This sequence belongs to the universal ribosomal protein uS15 family. As to quaternary structure, part of the 30S ribosomal subunit. Forms a bridge to the 50S subunit in the 70S ribosome, contacting the 23S rRNA.

One of the primary rRNA binding proteins, it binds directly to 16S rRNA where it helps nucleate assembly of the platform of the 30S subunit by binding and bridging several RNA helices of the 16S rRNA. Its function is as follows. Forms an intersubunit bridge (bridge B4) with the 23S rRNA of the 50S subunit in the ribosome. This Corynebacterium efficiens (strain DSM 44549 / YS-314 / AJ 12310 / JCM 11189 / NBRC 100395) protein is Small ribosomal subunit protein uS15.